The primary structure comprises 295 residues: Bifunctional protein FolD (295 aa).

NADP(+) contacts are provided by residues 166–168 (GRS), Ser-195, and Ile-236.

This sequence belongs to the tetrahydrofolate dehydrogenase/cyclohydrolase family. Homodimer.

It carries out the reaction (6R)-5,10-methylene-5,6,7,8-tetrahydrofolate + NADP(+) = (6R)-5,10-methenyltetrahydrofolate + NADPH. It catalyses the reaction (6R)-5,10-methenyltetrahydrofolate + H2O = (6R)-10-formyltetrahydrofolate + H(+). It functions in the pathway one-carbon metabolism; tetrahydrofolate interconversion. Functionally, catalyzes the oxidation of 5,10-methylenetetrahydrofolate to 5,10-methenyltetrahydrofolate and then the hydrolysis of 5,10-methenyltetrahydrofolate to 10-formyltetrahydrofolate. This chain is Bifunctional protein FolD, found in Chlorobium luteolum (strain DSM 273 / BCRC 81028 / 2530) (Pelodictyon luteolum).